A 326-amino-acid polypeptide reads, in one-letter code: Vacuolar protein sorting-associated protein 26A-B (326 aa).

It belongs to the VPS26 family. In terms of assembly, component of the heterotrimeric retromer cargo-selective complex (CSC) which is believed to associate with variable sorting nexins to form functionally distinct retromer complex variants.

The protein localises to the cytoplasm. The protein resides in the endosome membrane. It localises to the early endosome. Its function is as follows. Acts as a component of the retromer cargo-selective complex (CSC). The CSC is believed to be the core functional component of retromer or respective retromer complex variants acting to prevent missorting of selected transmembrane cargo proteins into the lysosomal degradation pathway. Retromer mediates retrograde transport of cargo proteins from endosomes to the trans-Golgi network (TGN). This Xenopus laevis (African clawed frog) protein is Vacuolar protein sorting-associated protein 26A-B (vps26a-b).